Here is an 87-residue protein sequence, read N- to C-terminus: Sec-independent protein translocase protein TatA (87 aa).

The chain crosses the membrane as a helical span at residues G3–A23. The interval M47–A87 is disordered. Residues P52–A87 are compositionally biased toward low complexity.

It belongs to the TatA/E family. In terms of assembly, the Tat system comprises two distinct complexes: a TatABC complex, containing multiple copies of TatA, TatB and TatC subunits, and a separate TatA complex, containing only TatA subunits. Substrates initially bind to the TatABC complex, which probably triggers association of the separate TatA complex to form the active translocon.

It is found in the cell membrane. In terms of biological role, part of the twin-arginine translocation (Tat) system that transports large folded proteins containing a characteristic twin-arginine motif in their signal peptide across membranes. TatA could form the protein-conducting channel of the Tat system. This Nocardia farcinica (strain IFM 10152) protein is Sec-independent protein translocase protein TatA.